A 366-amino-acid chain; its full sequence is 3-dehydroquinate synthase (366 aa).

Residues 75-80 (DGEEYK), 109-113 (GVVGD), 133-134 (TT), lysine 146, lysine 155, and 173-176 (TLDT) contribute to the NAD(+) site. 3 residues coordinate Zn(2+): glutamate 188, histidine 251, and histidine 268.

The protein belongs to the sugar phosphate cyclases superfamily. Dehydroquinate synthase family. It depends on Co(2+) as a cofactor. Zn(2+) serves as cofactor. NAD(+) is required as a cofactor.

Its subcellular location is the cytoplasm. The enzyme catalyses 7-phospho-2-dehydro-3-deoxy-D-arabino-heptonate = 3-dehydroquinate + phosphate. It participates in metabolic intermediate biosynthesis; chorismate biosynthesis; chorismate from D-erythrose 4-phosphate and phosphoenolpyruvate: step 2/7. Functionally, catalyzes the conversion of 3-deoxy-D-arabino-heptulosonate 7-phosphate (DAHP) to dehydroquinate (DHQ). The chain is 3-dehydroquinate synthase from Nitrosospira multiformis (strain ATCC 25196 / NCIMB 11849 / C 71).